The following is a 142-amino-acid chain: MAP3K7 C-terminal-like protein (142 aa).

As to expression, detected in lung and peripheral blood leukocytes. Expressed predominantly in peripheral blood leukocytes and ubiquitously in adult and fetal tissues. Also expressed strongly in breast carcinoma GI-101, colon adenocarcinoma GI-112, and prostatic adenocarcinoma PC3.

This Homo sapiens (Human) protein is MAP3K7 C-terminal-like protein (MAP3K7CL).